We begin with the raw amino-acid sequence, 546 residues long: Calcitonin receptor-like protein 1 (546 aa).

At 1 to 171 (MADATSPFNV…EVARNARKLE (171 aa)) the chain is on the cytoplasmic side. The helical transmembrane segment at 172–192 (FVGLGLSLVSLILAISIFSYF) threads the bilayer. Residues 193–205 (RRLRVFRNLLHLH) are Extracellular-facing. A helical membrane pass occupies residues 206-226 (LMIAMLMVVILRLVLYIDLIF). The Cytoplasmic portion of the chain corresponds to 227–251 (TGENGPHTNSAEGKTINTMPIVCEG). A helical transmembrane segment spans residues 252-272 (MFFFLEYFKTVTFCWMFLEGI). Residues 273 to 292 (YLNNQIVFGFFNSEPKLLPY) lie on the Extracellular side of the membrane. A helical membrane pass occupies residues 293-313 (FIAGYGIPLVHTMLWLLVVLI). The Cytoplasmic portion of the chain corresponds to 314 to 333 (KKDFKVERCLGSYYLEPEFW). A helical transmembrane segment spans residues 334-354 (ILDGPRMAELVINLFFICNVI). Residues 355–377 (RVLYSKVRESNNTSEAGLKKSVK) lie on the Extracellular side of the membrane. Asparagine 365 and asparagine 366 each carry an N-linked (GlcNAc...) asparagine glycan. A helical membrane pass occupies residues 378-398 (AAMMLLPLLGVPNIMQTIPFA). The Cytoplasmic segment spans residues 399-403 (PTRDN). A helical membrane pass occupies residues 404-424 (IMVFAVWTYTASFTYMYQGLM). At 425–546 (VASIYCFTNK…EGSNRSTKSP (122 aa)) the chain is on the extracellular side. 2 N-linked (GlcNAc...) asparagine glycosylation sites follow: asparagine 472 and asparagine 476. The interval 472–546 (NGTANASAPQ…EGSNRSTKSP (75 aa)) is disordered. Polar residues predominate over residues 473-485 (GTANASAPQTNNA). Over residues 500–520 (KGSDDSTTKLMKDAVMEEEKN) the composition is skewed to basic and acidic residues. Asparagine 540 is a glycosylation site (N-linked (GlcNAc...) asparagine).

Belongs to the G-protein coupled receptor 2 family. Expression was observed in the mechanosensory neuron pairs PLM, ALM, FLP, OLQD, and OLQV, the chemosensory neurons PHA, PHB, RMEV, the ring motor neurons RMED, and the pharyngeal interneuron pair I1. Expression in sensory neurons PHA, PQR and URY are responsible for mate searching behavior. Expressed in AIY, RIM, RIA, and other neurons.

It localises to the cell membrane. G-protein coupled receptor for PDF neuropeptides. Plays a role in responses to environmental signals, including chemicals and touch, and in modulating locomotory behaviors. Capable of transducing signals via an adenylate cyclase acy-1 cAMP-dependent pathway. Required to regulate the sex-specific expression of TGFbeta-like daf-7 in the ASJ chemosensory neurons, perhaps acting via acy-1. Involved in modulating mate searching behavior independent of nutritional status. In the presence of food, plays a role in initiating and extending exploratory roaming behavior, perhaps acting in AIY, RIM, RIA, and other neurons, in opposition to 5-hydroxytryptamine (serotonin) signaling. Involved in mediating arousal from the sleep-like state called lethargus, which occurs during molting between larval and adult stages, in part by regulating touch sensitivity. May play a role in circadian rhythms of locomotor activity. Functionally, G-protein coupled receptor which is activated by neuropeptides PDF-1 and PDF-2. Probably acts through the G-alpha(s) type of G proteins to elevate cAMP levels. In terms of biological role, G-protein coupled receptor which is activated by neuropeptides PDF-1 and PDF-2; however, activation is lower compared to isoforms a and b. Probably inhibits cAMP levels through the G-alpha(i/o) type of G proteins. The protein is Calcitonin receptor-like protein 1 (pdfr-1) of Caenorhabditis elegans.